The following is a 254-amino-acid chain: Alcohol dehydrogenase 2 (254 aa).

10-33 (FVAGLGGIGLDTSREIVKSGPKNL) is an NAD(+) binding site. A substrate-binding site is contributed by Ser-138. Tyr-151 serves as the catalytic Proton acceptor.

Belongs to the short-chain dehydrogenases/reductases (SDR) family. As to quaternary structure, homodimer.

It catalyses the reaction a primary alcohol + NAD(+) = an aldehyde + NADH + H(+). The enzyme catalyses a secondary alcohol + NAD(+) = a ketone + NADH + H(+). This chain is Alcohol dehydrogenase 2 (Adh2), found in Drosophila montana (Fruit fly).